The chain runs to 348 residues: Probable UDP-arabinopyranose mutase 5 (348 aa).

A DXD motif motif is present at residues 100–102 (DDD). Arg-148 carries an N-linked (Glc...) arginine glycan.

It belongs to the RGP family. In terms of assembly, heteromers with RGP1 and RGP2. Mn(2+) is required as a cofactor. Requires Mg(2+) as cofactor. In terms of processing, reversibly glycosylated in vitro by UDP-glucose, UDP-xylose and UDP-galactose, but not UDP-mannose. Widely expressed at low levels.

Its subcellular location is the cytoplasm. The protein localises to the cytosol. It is found in the golgi apparatus. It carries out the reaction UDP-beta-L-arabinofuranose = UDP-beta-L-arabinopyranose. Probable UDP-L-arabinose mutase involved in the biosynthesis of cell wall non-cellulosic polysaccharides. In Arabidopsis thaliana (Mouse-ear cress), this protein is Probable UDP-arabinopyranose mutase 5.